We begin with the raw amino-acid sequence, 235 residues long: Transcriptional regulatory protein WalR (235 aa).

Residues 4–117 form the Response regulatory domain; it reads KILVVDDEKP…ELLARVKANL (114 aa). D53 bears the 4-aspartylphosphate mark. A DNA-binding region (ompR/PhoB-type) is located at residues 132–231; it reads SNEIHIGSLV…RRGVGYYLRN (100 aa).

Homodimer. Phosphorylated by WalK.

It localises to the cytoplasm. In terms of biological role, member of the two-component regulatory system WalK/WalR involved in the regulation of the ftsAZ operon, the yocH, ykvT, cwlO, lytE, ydjM, yjeA, yoeB genes and the tagAB and tagDEF operons. Binds to the ftsAZ P1 promoter sequence in vitro. WalR has been shown to directly bind to the regulatory regions of yocH, ykvT, tagAB/tagDEF. Activates cwlO, lytE and ydjM and represses yoeB and yjeA. The sequence is that of Transcriptional regulatory protein WalR from Bacillus subtilis (strain 168).